The chain runs to 360 residues: Phospho-N-acetylmuramoyl-pentapeptide-transferase (360 aa).

10 consecutive transmembrane segments (helical) span residues 27–47 (IVSLLTALFISLWMGPRLIGW), 72–92 (PTMGGLMILTSITISVLMWAY), 94–114 (SNPYVWCVLFVLLGYGIVGFV), 132–152 (WKYFWQSVIALVVAFTMYCIG), 168–188 (IMPQLGLLYILLSYFVIVGTS), 199–219 (GLAIMPTVFVAAGMGLVAWAT), 236–256 (AGELVIVCTAIVGAGLGFLWF), 263–283 (VFMGDVGSLALGGALGTIAVL), 288–308 (FLLVIMGGVFVMETLSVILQV), and 338–358 (VIVRFWIISLMLVLIGLATLK).

It belongs to the glycosyltransferase 4 family. MraY subfamily. Mg(2+) serves as cofactor.

It is found in the cell inner membrane. The catalysed reaction is UDP-N-acetyl-alpha-D-muramoyl-L-alanyl-gamma-D-glutamyl-meso-2,6-diaminopimeloyl-D-alanyl-D-alanine + di-trans,octa-cis-undecaprenyl phosphate = di-trans,octa-cis-undecaprenyl diphospho-N-acetyl-alpha-D-muramoyl-L-alanyl-D-glutamyl-meso-2,6-diaminopimeloyl-D-alanyl-D-alanine + UMP. Its pathway is cell wall biogenesis; peptidoglycan biosynthesis. Its function is as follows. Catalyzes the initial step of the lipid cycle reactions in the biosynthesis of the cell wall peptidoglycan: transfers peptidoglycan precursor phospho-MurNAc-pentapeptide from UDP-MurNAc-pentapeptide onto the lipid carrier undecaprenyl phosphate, yielding undecaprenyl-pyrophosphoryl-MurNAc-pentapeptide, known as lipid I. The polypeptide is Phospho-N-acetylmuramoyl-pentapeptide-transferase (Edwardsiella ictaluri (strain 93-146)).